Here is a 126-residue protein sequence, read N- to C-terminus: Holo-[acyl-carrier-protein] synthase (126 aa).

Residues aspartate 8 and glutamate 50 each contribute to the Mg(2+) site.

This sequence belongs to the P-Pant transferase superfamily. AcpS family. Requires Mg(2+) as cofactor.

Its subcellular location is the cytoplasm. The catalysed reaction is apo-[ACP] + CoA = holo-[ACP] + adenosine 3',5'-bisphosphate + H(+). Its function is as follows. Transfers the 4'-phosphopantetheine moiety from coenzyme A to a Ser of acyl-carrier-protein. The protein is Holo-[acyl-carrier-protein] synthase of Micrococcus luteus (strain ATCC 4698 / DSM 20030 / JCM 1464 / CCM 169 / CCUG 5858 / IAM 1056 / NBRC 3333 / NCIMB 9278 / NCTC 2665 / VKM Ac-2230) (Micrococcus lysodeikticus).